The primary structure comprises 1024 residues: Non-canonical nonribosomal peptide synthetase FrzA (1024 aa).

The adenylation (A) domain stretch occupies residues 29-425 (RAQKSHQAIA…GRRDHQVKVR (397 aa)). In terms of domain architecture, Carrier spans 534–611 (NASQDVRSAL…ALTSIIKQRL (78 aa)). Residue Ser-571 is modified to O-(pantetheine 4'-phosphoryl)serine. The 244-residue stretch at 655–898 (LTGGTGFVGA…VPVDYVNAAI (244 aa)) folds into the Thioester reductase (TE) domain.

This sequence belongs to the NRP synthetase family. It depends on pantetheine 4'-phosphate as a cofactor.

It carries out the reaction L-tyrosinal + AMP + diphosphate + NADP(+) = L-tyrosine + ATP + NADPH + H(+). It participates in secondary metabolite biosynthesis. Functionally, non-canonical nonribosomal peptide synthetase; part of the gene cluster that mediates the biosynthesis of the alkaloid (-)-FR901483, a potent immunosuppressant that shows efficacy in animal models and a probable inhibitor of purine nucleotide biosynthesis by targeting phosphoribosylpyrophosphate amidotransferase (PPAT). Within the pathway, FrzA catalyzes the reduction of L-tyrosine via its C-terminal reductase domain to produce L-tyrosinal. The biosynthesis of (-)-FR901483 starts with the condensation of two L-tyrosines to yield (S,S)-dityrosyl-piperazine. This process occurs in 3 steps with the non-canonical nonribosomal peptide synthetase FrzA catalyzing the reduction of L-tyrosine into L-tyrosinal, the spontaneous condensation of 2 L-tyrosinal units, and the subsequent reduction by the NmrA-like family domain-containing oxidoreductase FrzB. The cytochrome P450 monooxygenase FrzC then performs coupling between N10 and C1' to morph the piperazine into a 1,4-diazabicyclo[3.2.1]octane spiro-fused to a 2,5-cyclohexadienone. The dienone portion is further reduced to cyclohexanone by the flavin-dependent reductase FrzD. The methyltranserases (MTs) FrzE and FrzF are then involved in the methylation at the C10' amine and the C4 phenolic oxygen, respectively. The order of the two MTs appear to be interchangeable. Cleavage of the C9-N10' bond by the dioxygenase FrzG then leads to formation of a conjugated iminium. In addition to the oxidation of C9, an additional dehydrogenation between C7 and C8 can occur to give a likely shunt product. The next biosynthetic step is the intramolecular aldol condensation catalyzed by the newly identified aldolase FrzH to yield an aza-tricyclic product with the formation of a C9-C3' bond. The short-chain dehydrogenase/reductase FrzI then produces dephospho-(-)-FR901483 that is phosphorylated at C4'-OH into (-)-FR901483 by the phosphotransferase FrzJ. The sequence is that of Non-canonical nonribosomal peptide synthetase FrzA from Cladobotryum sp.